A 409-amino-acid chain; its full sequence is Gamma-glutamyl phosphate reductase (409 aa).

Belongs to the gamma-glutamyl phosphate reductase family.

It is found in the cytoplasm. The catalysed reaction is L-glutamate 5-semialdehyde + phosphate + NADP(+) = L-glutamyl 5-phosphate + NADPH + H(+). Its pathway is amino-acid biosynthesis; L-proline biosynthesis; L-glutamate 5-semialdehyde from L-glutamate: step 2/2. Its function is as follows. Catalyzes the NADPH-dependent reduction of L-glutamate 5-phosphate into L-glutamate 5-semialdehyde and phosphate. The product spontaneously undergoes cyclization to form 1-pyrroline-5-carboxylate. The polypeptide is Gamma-glutamyl phosphate reductase (Bartonella tribocorum (strain CIP 105476 / IBS 506)).